Here is a 149-residue protein sequence, read N- to C-terminus: uncharacterized protein (149 aa).

Phosphoserine is present on Ser-21. 2 helical membrane-spanning segments follow: residues 48–68 (FMEF…WVLG) and 72–92 (VLAA…FQLV). The tract at residues 116 to 149 (AEEVPPPSYPSLEEENEGNEEIEESEEMNTLLSK) is disordered. A compositionally biased stretch (acidic residues) spans 127–142 (LEEENEGNEEIEESEE).

The protein localises to the membrane. This is an uncharacterized protein from Schizosaccharomyces pombe (strain 972 / ATCC 24843) (Fission yeast).